Reading from the N-terminus, the 492-residue chain is MSNYFNTLNLRQQLAQLGKCRFMARTEFADGVNALRGKKVVIVGCGAQGLNQGLNMRDSGLDVAYALRAEAIAERRDSYRRATEHGFCVGDYQALIPQADLVINLTPDKQHAAVVSAVQPLMKPGAALGYSHGFNIVEVGQQIRPDITVVMVAPKCPGTEVREEYKRGFGVPTLIAVHPENDPRGAGMAIAKAWASATGGDRAGVLESSFVAEVKSDLMGEQTILCGMLQTGSLLCYERLVAEGADPAWAGKLIQFGWETITEALKQGGITLMMDRLSNPAKLRAYTLAGQLKTLMAPLFAKHMDDILSGAFSQGMMADWAADDAHLLTWRAETGESAFEKAPPFEGKIDEQTYFDRGVLLVAMVKAGVELAFETMVASGIVAESAYYESLHELPLIANTIARRRLYEMNVVISDTAEYGNYLFANAAVPLLRQGFMETLQPGDLGQPLPAEAVDNAALREVNQAIRQHPIETVGERLRGYMTDMKRVAVAG.

Residues 15 to 208 enclose the KARI N-terminal Rossmann domain; sequence AQLGKCRFMA…GGDRAGVLES (194 aa). NADP(+) is bound by residues 45 to 48, Arg-68, Arg-76, Ser-78, and 108 to 110; these read CGAQ and DKQ. His-132 is an active-site residue. Gly-158 serves as a coordination point for NADP(+). KARI C-terminal knotted domains follow at residues 209 to 344 and 345 to 485; these read SFVA…KAPP and FEGK…MTDM. Mg(2+)-binding residues include Asp-217, Glu-221, Glu-389, and Glu-393. Residue Ser-414 coordinates substrate.

The protein belongs to the ketol-acid reductoisomerase family. The cofactor is Mg(2+).

It carries out the reaction (2R)-2,3-dihydroxy-3-methylbutanoate + NADP(+) = (2S)-2-acetolactate + NADPH + H(+). It catalyses the reaction (2R,3R)-2,3-dihydroxy-3-methylpentanoate + NADP(+) = (S)-2-ethyl-2-hydroxy-3-oxobutanoate + NADPH + H(+). It functions in the pathway amino-acid biosynthesis; L-isoleucine biosynthesis; L-isoleucine from 2-oxobutanoate: step 2/4. Its pathway is amino-acid biosynthesis; L-valine biosynthesis; L-valine from pyruvate: step 2/4. Involved in the biosynthesis of branched-chain amino acids (BCAA). Catalyzes an alkyl-migration followed by a ketol-acid reduction of (S)-2-acetolactate (S2AL) to yield (R)-2,3-dihydroxy-isovalerate. In the isomerase reaction, S2AL is rearranged via a Mg-dependent methyl migration to produce 3-hydroxy-3-methyl-2-ketobutyrate (HMKB). In the reductase reaction, this 2-ketoacid undergoes a metal-dependent reduction by NADPH to yield (R)-2,3-dihydroxy-isovalerate. This chain is Ketol-acid reductoisomerase (NADP(+)), found in Edwardsiella ictaluri (strain 93-146).